The following is a 90-amino-acid chain: Small ribosomal subunit protein uS15c (90 aa).

This sequence belongs to the universal ribosomal protein uS15 family. Part of the 30S ribosomal subunit.

It is found in the plastid. The protein localises to the chloroplast. This chain is Small ribosomal subunit protein uS15c (rps15), found in Drimys granadensis.